The primary structure comprises 516 residues: Methionine--tRNA ligase (516 aa).

The 'HIGH' region motif lies at S14–H24. A 'KMSKS' region motif is present at residues K302–S306. K305 serves as a coordination point for ATP.

The protein belongs to the class-I aminoacyl-tRNA synthetase family. MetG type 2B subfamily. As to quaternary structure, monomer.

It is found in the cytoplasm. The enzyme catalyses tRNA(Met) + L-methionine + ATP = L-methionyl-tRNA(Met) + AMP + diphosphate. Its function is as follows. Is required not only for elongation of protein synthesis but also for the initiation of all mRNA translation through initiator tRNA(fMet) aminoacylation. This Rhizobium meliloti (strain 1021) (Ensifer meliloti) protein is Methionine--tRNA ligase.